The chain runs to 207 residues: MPKVALYNTEGAQVGEIELNDAIFGIEPNEAVMHQAVVTQLAAWRRGTHKVKSRGEVSGGGKKPWRQKGTGRARAGTSRSPLWRGGAIIFGPQPRSYKIAMPKKVRRLALKSALSDKVRSGNLIVVDALEMDAPKTKVIAGILNKLKVERKALLVTADIDETVFKSARNIPGVSPVEAVGINVYDILNHDKLVITKNAVAKVEEVFA.

Positions 49-79 (HKVKSRGEVSGGGKKPWRQKGTGRARAGTSR) are disordered.

It belongs to the universal ribosomal protein uL4 family. As to quaternary structure, part of the 50S ribosomal subunit.

In terms of biological role, one of the primary rRNA binding proteins, this protein initially binds near the 5'-end of the 23S rRNA. It is important during the early stages of 50S assembly. It makes multiple contacts with different domains of the 23S rRNA in the assembled 50S subunit and ribosome. Functionally, forms part of the polypeptide exit tunnel. The protein is Large ribosomal subunit protein uL4 of Heliobacterium modesticaldum (strain ATCC 51547 / Ice1).